A 653-amino-acid chain; its full sequence is Mannosyl-oligosaccharide 1,2-alpha-mannosidase IA (653 aa).

Residues 1–41 are Cytoplasmic-facing; it reads MPVGGLLPLFSSPAGGVLGGGLGGGGGRKGSGPAALRLTEK. The helical; Signal-anchor for type II membrane protein transmembrane segment at 42-62 threads the bilayer; sequence FVLLLVFSAFITLCFGAIFFL. At 63–653 the chain is on the lumenal side; it reads PDSSKLLSGV…DKKEVEIREE (591 aa). Residues 81–116 are disordered; that stretch reads QPAADHKPGPGARAEDAAEGRARRREEGAPGDPEAA. The segment covering 84 to 108 has biased composition (basic and acidic residues); it reads ADHKPGPGARAEDAAEGRARRREEG. Cys476 and Cys508 are joined by a disulfide. Asn513 carries N-linked (GlcNAc...) asparagine glycosylation. Glu522 functions as the Proton donor in the catalytic mechanism.

This sequence belongs to the glycosyl hydrolase 47 family. Ca(2+) serves as cofactor.

It is found in the golgi apparatus membrane. It carries out the reaction N(4)-(alpha-D-Man-(1-&gt;2)-alpha-D-Man-(1-&gt;2)-alpha-D-Man-(1-&gt;3)-[alpha-D-Man-(1-&gt;2)-alpha-D-Man-(1-&gt;3)-[alpha-D-Man-(1-&gt;2)-alpha-D-Man-(1-&gt;6)]-alpha-D-Man-(1-&gt;6)]-beta-D-Man-(1-&gt;4)-beta-D-GlcNAc-(1-&gt;4)-beta-D-GlcNAc)-L-asparaginyl-[protein] (N-glucan mannose isomer 9A1,2,3B1,2,3) + 4 H2O = N(4)-(alpha-D-Man-(1-&gt;3)-[alpha-D-Man-(1-&gt;3)-[alpha-D-Man-(1-&gt;6)]-alpha-D-Man-(1-&gt;6)]-beta-D-Man-(1-&gt;4)-beta-D-GlcNAc-(1-&gt;4)-beta-D-GlcNAc)-L-asparaginyl-[protein] (N-glucan mannose isomer 5A1,2) + 4 beta-D-mannose. The catalysed reaction is N(4)-(alpha-D-Man-(1-&gt;2)-alpha-D-Man-(1-&gt;2)-alpha-D-Man-(1-&gt;3)-[alpha-D-Man-(1-&gt;3)-[alpha-D-Man-(1-&gt;2)-alpha-D-Man-(1-&gt;6)]-alpha-D-Man-(1-&gt;6)]-beta-D-Man-(1-&gt;4)-beta-D-GlcNAc-(1-&gt;4)-beta-D-GlcNAc)-L-asparaginyl-[protein] (N-glucan mannose isomer 8A1,2,3B1,3) + 3 H2O = N(4)-(alpha-D-Man-(1-&gt;3)-[alpha-D-Man-(1-&gt;3)-[alpha-D-Man-(1-&gt;6)]-alpha-D-Man-(1-&gt;6)]-beta-D-Man-(1-&gt;4)-beta-D-GlcNAc-(1-&gt;4)-beta-D-GlcNAc)-L-asparaginyl-[protein] (N-glucan mannose isomer 5A1,2) + 3 beta-D-mannose. The protein operates within protein modification; protein glycosylation. Inhibited by both 1-deoxymannojirimycin and kifunensine. In terms of biological role, involved in the maturation of Asn-linked oligosaccharides. Progressively trim alpha-1,2-linked mannose residues from Man(9)GlcNAc(2) to produce Man(5)GlcNAc(2). This chain is Mannosyl-oligosaccharide 1,2-alpha-mannosidase IA (MAN1A1), found in Homo sapiens (Human).